Here is a 542-residue protein sequence, read N- to C-terminus: GMP synthase [glutamine-hydrolyzing] (542 aa).

One can recognise a Glutamine amidotransferase type-1 domain in the interval 28–218; it reads MIVILDFGSQ…VYHICECEPT (191 aa). Catalysis depends on cysteine 105, which acts as the Nucleophile. Active-site residues include histidine 192 and glutamate 194. The GMPS ATP-PPase domain maps to 219–417; the sequence is WTTEAFVDET…IGLPEEIVRR (199 aa). Residue 246-252 coordinates ATP; it reads SGGVDSS.

In terms of assembly, homodimer.

The enzyme catalyses XMP + L-glutamine + ATP + H2O = GMP + L-glutamate + AMP + diphosphate + 2 H(+). It functions in the pathway purine metabolism; GMP biosynthesis; GMP from XMP (L-Gln route): step 1/1. Catalyzes the synthesis of GMP from XMP. This Crocosphaera subtropica (strain ATCC 51142 / BH68) (Cyanothece sp. (strain ATCC 51142)) protein is GMP synthase [glutamine-hydrolyzing].